Reading from the N-terminus, the 168-residue chain is Large ribosomal subunit protein uL11 (168 aa).

The protein belongs to the universal ribosomal protein uL11 family. Part of the ribosomal stalk of the 50S ribosomal subunit. Interacts with L10 and the large rRNA to form the base of the stalk. L10 forms an elongated spine to which L12 dimers bind in a sequential fashion forming a multimeric L10(L12)X complex.

Its function is as follows. Forms part of the ribosomal stalk which helps the ribosome interact with GTP-bound translation factors. In Metallosphaera sedula (strain ATCC 51363 / DSM 5348 / JCM 9185 / NBRC 15509 / TH2), this protein is Large ribosomal subunit protein uL11.